A 313-amino-acid chain; its full sequence is tRNA dimethylallyltransferase (313 aa).

20–27 (GPTGTGKS) serves as a coordination point for ATP. 22 to 27 (TGTGKS) contributes to the substrate binding site.

Belongs to the IPP transferase family. In terms of assembly, monomer. The cofactor is Mg(2+).

The catalysed reaction is adenosine(37) in tRNA + dimethylallyl diphosphate = N(6)-dimethylallyladenosine(37) in tRNA + diphosphate. Catalyzes the transfer of a dimethylallyl group onto the adenine at position 37 in tRNAs that read codons beginning with uridine, leading to the formation of N6-(dimethylallyl)adenosine (i(6)A). The polypeptide is tRNA dimethylallyltransferase (Kocuria rhizophila (strain ATCC 9341 / DSM 348 / NBRC 103217 / DC2201)).